The primary structure comprises 277 residues: Large ribosomal subunit protein uL2 (277 aa).

Disordered regions lie at residues 37 to 59 (KNST…GGHK) and 221 to 265 (RGTA…KRTD). The segment covering 50–59 (TTRHRGGGHK) has biased composition (basic residues). A compositionally biased stretch (basic and acidic residues) spans 229 to 241 (DHPHGGGEGRTGE).

The protein belongs to the universal ribosomal protein uL2 family. As to quaternary structure, part of the 50S ribosomal subunit. Forms a bridge to the 30S subunit in the 70S ribosome.

In terms of biological role, one of the primary rRNA binding proteins. Required for association of the 30S and 50S subunits to form the 70S ribosome, for tRNA binding and peptide bond formation. It has been suggested to have peptidyltransferase activity; this is somewhat controversial. Makes several contacts with the 16S rRNA in the 70S ribosome. In Chromobacterium violaceum (strain ATCC 12472 / DSM 30191 / JCM 1249 / CCUG 213 / NBRC 12614 / NCIMB 9131 / NCTC 9757 / MK), this protein is Large ribosomal subunit protein uL2.